The primary structure comprises 267 residues: Tryptophan synthase alpha chain (267 aa).

Active-site proton acceptor residues include E43 and D54.

The protein belongs to the TrpA family. Tetramer of two alpha and two beta chains.

The catalysed reaction is (1S,2R)-1-C-(indol-3-yl)glycerol 3-phosphate + L-serine = D-glyceraldehyde 3-phosphate + L-tryptophan + H2O. The protein operates within amino-acid biosynthesis; L-tryptophan biosynthesis; L-tryptophan from chorismate: step 5/5. Its function is as follows. The alpha subunit is responsible for the aldol cleavage of indoleglycerol phosphate to indole and glyceraldehyde 3-phosphate. The sequence is that of Tryptophan synthase alpha chain from Bacillus licheniformis (strain ATCC 14580 / DSM 13 / JCM 2505 / CCUG 7422 / NBRC 12200 / NCIMB 9375 / NCTC 10341 / NRRL NRS-1264 / Gibson 46).